The primary structure comprises 537 residues: Tyrosine-protein kinase Yes (537 aa).

The segment covering 1-22 (MGCIKSKEDKGPSIKYRTEPKP) has biased composition (basic and acidic residues). A disordered region spans residues 1 to 60 (MGCIKSKEDKGPSIKYRTEPKPDPGSQYGADPTQATQSPGIKGPAPNFNSHSMTPFGGSS). G2 carries N-myristoyl glycine lipidation. C3 carries S-palmitoyl cysteine; in membrane form lipidation. An SH3 domain is found at 85-146 (GGVTVFVALY…PSNYVAPADS (62 aa)). In terms of domain architecture, SH2 spans 152-249 (WYFGKMGRKD…GLCYRLTTVC (98 aa)). Positions 271 to 524 (LRLDVKLGQG…YIQSFLEDYF (254 aa)) constitute a Protein kinase domain. Residues 277–285 (LGQGCFGEV) and K299 each bind ATP. The active-site Proton acceptor is D390. At Y420 the chain carries Phosphotyrosine; by autocatalysis. Y531 is modified (phosphotyrosine; by CSK).

It belongs to the protein kinase superfamily. Tyr protein kinase family. SRC subfamily. Post-translationally, autophosphorylated at Tyr-420 inducing activation. In terms of processing, palmitoylation at Cys-3 promotes membrane localization.

It localises to the cell membrane. The protein localises to the cytoplasm. The protein resides in the cytoskeleton. Its subcellular location is the microtubule organizing center. It is found in the centrosome. It localises to the cytosol. The protein localises to the cell junction. The enzyme catalyses L-tyrosyl-[protein] + ATP = O-phospho-L-tyrosyl-[protein] + ADP + H(+). Non-receptor protein tyrosine kinase that is involved in the regulation of cell growth and survival, apoptosis, cell-cell adhesion, cytoskeleton remodeling, differentiation, G2/M progression and cytokinesis. The protein is Tyrosine-protein kinase Yes (yes1) of Xenopus laevis (African clawed frog).